The chain runs to 129 residues: Large ribosomal subunit protein bL12 (129 aa).

It belongs to the bacterial ribosomal protein bL12 family. Homodimer. Part of the ribosomal stalk of the 50S ribosomal subunit. Forms a multimeric L10(L12)X complex, where L10 forms an elongated spine to which 2 to 4 L12 dimers bind in a sequential fashion. Binds GTP-bound translation factors.

Functionally, forms part of the ribosomal stalk which helps the ribosome interact with GTP-bound translation factors. Is thus essential for accurate translation. This Maridesulfovibrio salexigens (strain ATCC 14822 / DSM 2638 / NCIMB 8403 / VKM B-1763) (Desulfovibrio salexigens) protein is Large ribosomal subunit protein bL12.